The primary structure comprises 602 residues: Potassium-transporting ATPase potassium-binding subunit (602 aa).

The next 4 helical transmembrane spans lie at 5 to 25, 65 to 85, 136 to 156, and 179 to 199; these read AMLQLGLFLVVLIALAWPLGA, GYAVALILFNVLGVAAVYALQ, GLTVQNFVSAATGAAVVIALI, and LYVLLPLAVVFALVFTQQGAI. The tract at residues 221 to 248 is disordered; the sequence is QDAKGNPVLGKDGKPVMEDKTSQTQTLP. Residues 231–241 show a composition bias toward basic and acidic residues; that stretch reads KDGKPVMEDKT. The next 6 helical transmembrane spans lie at 283–303, 312–332, 419–439, 458–478, 523–543, and 566–586; these read LANFLQDIAIFLIPAALCFLF, QGWAILAAMTIMFATAVVVET, GLYGMLIFAILAVFIAGLMVG, AITILVTPTLVLALTAIAVSL, IMTGLAMFFGRFFMIVPILAI, and LFVTLLIGTVLLVGALNYVPA.

Belongs to the KdpA family. In terms of assembly, the system is composed of three essential subunits: KdpA, KdpB and KdpC.

Its subcellular location is the cell inner membrane. Functionally, part of the high-affinity ATP-driven potassium transport (or Kdp) system, which catalyzes the hydrolysis of ATP coupled with the electrogenic transport of potassium into the cytoplasm. This subunit binds the periplasmic potassium ions and delivers the ions to the membrane domain of KdpB through an intramembrane tunnel. This Chromobacterium violaceum (strain ATCC 12472 / DSM 30191 / JCM 1249 / CCUG 213 / NBRC 12614 / NCIMB 9131 / NCTC 9757 / MK) protein is Potassium-transporting ATPase potassium-binding subunit.